The primary structure comprises 942 residues: Glutamyl aminopeptidase (942 aa).

Residues 1–14 lie on the Cytoplasmic side of the membrane; that stretch reads MSTDSKRYCIKTKH. The chain crosses the membrane as a helical; Signal-anchor for type II membrane protein span at residues 15–35; the sequence is VAIICAAVVAVGLIVGLSVGL. Topologically, residues 36–942 are extracellular; sequence TRSCDSKDGG…RDTIRDWFFN (907 aa). The interval 40-74 is disordered; it reads DSKDGGQGTTQSPSHLPPTSSPPQDQGVCPASEDE. Asn110, Asn114, and Asn187 each carry an N-linked (GlcNAc...) asparagine glycan. Residue Glu213 coordinates substrate. N-linked (GlcNAc...) asparagine glycosylation occurs at Asn314. 347 to 351 is a substrate binding site; sequence GAMEN. An N-linked (GlcNAc...) asparagine glycan is attached at Asn367. Position 383 (His383) interacts with Zn(2+). Residue Glu384 is the Proton acceptor of the active site. Zn(2+) is bound by residues His387 and Glu406. N-linked (GlcNAc...) asparagine glycosylation is found at Asn557, Asn579, Asn587, Asn597, Asn632, Asn668, Asn753, Asn786, and Asn791. Arg877 contributes to the substrate binding site.

Belongs to the peptidase M1 family. As to quaternary structure, homodimer; disulfide-linked. Zn(2+) is required as a cofactor.

The protein resides in the cell membrane. It carries out the reaction Release of N-terminal glutamate (and to a lesser extent aspartate) from a peptide.. Its activity is regulated as follows. Substrate specificity is modulated by calcium which enhances the enzymatic activity for cleavage of acidic residues while reducing its activity with basic residues. Inhibited by aminopeptidase inhibitors amastatin and bestatin. In terms of biological role, regulates central hypertension through its calcium-modulated preference to cleave N-terminal acidic residues from peptides such as angiotensin II. The polypeptide is Glutamyl aminopeptidase (ENPEP) (Sus scrofa (Pig)).